The chain runs to 353 residues: Photosystem II protein D1 (353 aa).

T2 is subject to N-acetylthreonine. T2 is subject to Phosphothreonine. 3 helical membrane-spanning segments follow: residues 29–46 (YIGW…TATS), 118–133 (HFLL…EWEL), and 142–156 (WIAV…AATA). Residue H118 participates in chlorophyll a binding. Y126 contacts pheophytin a. 2 residues coordinate [CaMn4O5] cluster: D170 and E189. The helical transmembrane segment at 197 to 218 (FHMLGVAGVFGGSLFSAMHGSL) threads the bilayer. Chlorophyll a is bound at residue H198. A quinone contacts are provided by residues H215 and 264–265 (SF). H215 contacts Fe cation. A Fe cation-binding site is contributed by H272. The helical transmembrane segment at 274–288 (FLAAWPVVGIWFTAL) threads the bilayer. The [CaMn4O5] cluster site is built by H332, E333, D342, and A344. The propeptide occupies 345–353 (AVEVPSTNG).

It belongs to the reaction center PufL/M/PsbA/D family. PSII is composed of 1 copy each of membrane proteins PsbA, PsbB, PsbC, PsbD, PsbE, PsbF, PsbH, PsbI, PsbJ, PsbK, PsbL, PsbM, PsbT, PsbX, PsbY, PsbZ, Psb30/Ycf12, at least 3 peripheral proteins of the oxygen-evolving complex and a large number of cofactors. It forms dimeric complexes. The cofactor is The D1/D2 heterodimer binds P680, chlorophylls that are the primary electron donor of PSII, and subsequent electron acceptors. It shares a non-heme iron and each subunit binds pheophytin, quinone, additional chlorophylls, carotenoids and lipids. D1 provides most of the ligands for the Mn4-Ca-O5 cluster of the oxygen-evolving complex (OEC). There is also a Cl(-1) ion associated with D1 and D2, which is required for oxygen evolution. The PSII complex binds additional chlorophylls, carotenoids and specific lipids.. Post-translationally, tyr-161 forms a radical intermediate that is referred to as redox-active TyrZ, YZ or Y-Z. In terms of processing, C-terminally processed by CTPA; processing is essential to allow assembly of the oxygen-evolving complex and thus photosynthetic growth.

The protein resides in the plastid. It localises to the chloroplast thylakoid membrane. The catalysed reaction is 2 a plastoquinone + 4 hnu + 2 H2O = 2 a plastoquinol + O2. Functionally, photosystem II (PSII) is a light-driven water:plastoquinone oxidoreductase that uses light energy to abstract electrons from H(2)O, generating O(2) and a proton gradient subsequently used for ATP formation. It consists of a core antenna complex that captures photons, and an electron transfer chain that converts photonic excitation into a charge separation. The D1/D2 (PsbA/PsbD) reaction center heterodimer binds P680, the primary electron donor of PSII as well as several subsequent electron acceptors. The polypeptide is Photosystem II protein D1 (Calycanthus floridus var. glaucus (Eastern sweetshrub)).